Reading from the N-terminus, the 110-residue chain is Acylphosphatase (110 aa).

Residues Thr21 to Gly108 form the Acylphosphatase-like domain. Active-site residues include Arg36 and Asn54.

Belongs to the acylphosphatase family.

The catalysed reaction is an acyl phosphate + H2O = a carboxylate + phosphate + H(+). The chain is Acylphosphatase (acyP) from Koribacter versatilis (strain Ellin345).